We begin with the raw amino-acid sequence, 1081 residues long: Serine/threonine-protein kinase PKH2 (1081 aa).

At Ser138 the chain carries Phosphoserine. In terms of domain architecture, Protein kinase spans 179–443 (FKFGSVIGDG…ISQIKEHHFF (265 aa)). ATP contacts are provided by residues 189 to 191 (AYS) and Lys208. The segment at 210–255 (LNKEYLIRQKKVKYVSIEKTALQKLNNSPSVVRLFSTFQDESSLYF) is PIF-pocket. Residues 258–260 (EYA) and Asp264 contribute to the ATP site. The active-site Proton acceptor is the Asp303. The ATP site is built by Glu307 and Asp321. Polar residues predominate over residues 494 to 526 (HLVTQRSASSPSVEETTHSTLYNNNTHASTESE). Disordered stretches follow at residues 494–652 (HLVT…TYQM), 805–833 (NRSGEGYKCNQNSSPMKDDDKSESNNKGS), and 970–1017 (IERR…INSA). The segment covering 527–538 (ISIKKRPTDERT) has biased composition (basic and acidic residues). Composition is skewed to low complexity over residues 564–575 (AASAALAASAAL) and 582–602 (SYPTSSSKSSRSSSPATTSRP). The residue at position 619 (Ser619) is a Phosphoserine. Residues 632 to 645 (PMPPYTPPMSPPMT) are compositionally biased toward pro residues. 2 stretches are compositionally biased toward polar residues: residues 805–819 (NRSGEGYKCNQNSSP) and 998–1017 (HSQSPSISKHNSFSESINSA). Ser1009 carries the phosphoserine modification.

The protein belongs to the protein kinase superfamily. AGC Ser/Thr protein kinase family. PDPK1 subfamily.

Its subcellular location is the nucleus. The protein resides in the cytoplasm. The protein localises to the cell cortex. The enzyme catalyses L-seryl-[protein] + ATP = O-phospho-L-seryl-[protein] + ADP + H(+). It catalyses the reaction L-threonyl-[protein] + ATP = O-phospho-L-threonyl-[protein] + ADP + H(+). With respect to regulation, sphingoid base activates kinase activity. Serine/threonine-protein kinase which is part sphingolipid-mediated signaling pathway that is required for the internalization step of endocytosis by regulating eisosome assembly and organization, and modulating the organization of the plasma membrane. Phosphorylates and activates PKC1. Activates YPK1 and YPK2, 2 components of signaling cascade required for maintenance of cell wall integrity. Required for stress-induced P-body assembly and regulates global mRNA decay at the deadenylation step. In Saccharomyces cerevisiae (strain ATCC 204508 / S288c) (Baker's yeast), this protein is Serine/threonine-protein kinase PKH2 (PKH2).